The following is a 917-amino-acid chain: DNA mismatch repair protein spellchecker 1 (917 aa).

G667–S674 provides a ligand contact to ATP.

It belongs to the DNA mismatch repair MutS family. In terms of assembly, heterodimer of Msh2/Spel and Msh6.

It is found in the nucleus. Involved in postreplication mismatch repair. Binds specifically to DNA containing mismatched nucleotides thus providing a target for the excision repair processes characteristic of postreplication mismatch repair. The chain is DNA mismatch repair protein spellchecker 1 (spel1) from Drosophila melanogaster (Fruit fly).